The chain runs to 227 residues: Cytochrome c oxidase subunit 2 (227 aa).

At 1 to 14 (MPYPLQLGLQDATS) the chain is on the mitochondrial intermembrane side. Residues 15–45 (PIMEELTHFHDHTLMIVFLISSLVLYIISSM) traverse the membrane as a helical segment. Residues 46 to 59 (LTTKLTHTSTMDAQ) are Mitochondrial matrix-facing. A helical membrane pass occupies residues 60-87 (EVETIWTILPAMILILIALPSLRILYMM). The Mitochondrial intermembrane portion of the chain corresponds to 88-227 (DEINDPSLTV…YFEDWSASLL (140 aa)). Cu cation contacts are provided by His-161, Cys-196, Glu-198, Cys-200, His-204, and Met-207. Mg(2+) is bound at residue Glu-198.

This sequence belongs to the cytochrome c oxidase subunit 2 family. Component of the cytochrome c oxidase (complex IV, CIV), a multisubunit enzyme composed of 14 subunits. The complex is composed of a catalytic core of 3 subunits MT-CO1, MT-CO2 and MT-CO3, encoded in the mitochondrial DNA, and 11 supernumerary subunits COX4I, COX5A, COX5B, COX6A, COX6B, COX6C, COX7A, COX7B, COX7C, COX8 and NDUFA4, which are encoded in the nuclear genome. The complex exists as a monomer or a dimer and forms supercomplexes (SCs) in the inner mitochondrial membrane with NADH-ubiquinone oxidoreductase (complex I, CI) and ubiquinol-cytochrome c oxidoreductase (cytochrome b-c1 complex, complex III, CIII), resulting in different assemblies (supercomplex SCI(1)III(2)IV(1) and megacomplex MCI(2)III(2)IV(2)). Found in a complex with TMEM177, COA6, COX18, COX20, SCO1 and SCO2. Interacts with TMEM177 in a COX20-dependent manner. Interacts with COX20. Interacts with COX16. It depends on Cu cation as a cofactor.

The protein resides in the mitochondrion inner membrane. It carries out the reaction 4 Fe(II)-[cytochrome c] + O2 + 8 H(+)(in) = 4 Fe(III)-[cytochrome c] + 2 H2O + 4 H(+)(out). Functionally, component of the cytochrome c oxidase, the last enzyme in the mitochondrial electron transport chain which drives oxidative phosphorylation. The respiratory chain contains 3 multisubunit complexes succinate dehydrogenase (complex II, CII), ubiquinol-cytochrome c oxidoreductase (cytochrome b-c1 complex, complex III, CIII) and cytochrome c oxidase (complex IV, CIV), that cooperate to transfer electrons derived from NADH and succinate to molecular oxygen, creating an electrochemical gradient over the inner membrane that drives transmembrane transport and the ATP synthase. Cytochrome c oxidase is the component of the respiratory chain that catalyzes the reduction of oxygen to water. Electrons originating from reduced cytochrome c in the intermembrane space (IMS) are transferred via the dinuclear copper A center (CU(A)) of subunit 2 and heme A of subunit 1 to the active site in subunit 1, a binuclear center (BNC) formed by heme A3 and copper B (CU(B)). The BNC reduces molecular oxygen to 2 water molecules using 4 electrons from cytochrome c in the IMS and 4 protons from the mitochondrial matrix. The polypeptide is Cytochrome c oxidase subunit 2 (MT-CO2) (Dugong dugon (Dugong)).